The following is a 214-amino-acid chain: Putative germin-like protein 9-2 (214 aa).

Positions 1 to 25 (MALSYYSLLLLLLAVWAPALTLVMA) are cleaved as a signal peptide. N-linked (GlcNAc...) asparagine glycans are attached at residues asparagine 44 and asparagine 60. Positions 56-202 (RKVFNTSSAP…SFKTDVPTIL (147 aa)) constitute a Cupin type-1 domain. Residues histidine 104, histidine 106, glutamate 111, and histidine 150 each contribute to the Mn(2+) site.

Belongs to the germin family. Oligomer (believed to be a pentamer but probably hexamer).

The protein resides in the secreted. It is found in the extracellular space. It localises to the apoplast. May play a role in plant defense. Probably has no oxalate oxidase activity even if the active site is conserved. This chain is Putative germin-like protein 9-2, found in Oryza sativa subsp. japonica (Rice).